Consider the following 101-residue polypeptide: Ribonuclease kappa-A (101 aa).

Helical transmembrane passes span 13–33 (ACGI…GVFF) and 68–88 (VSYN…FSFC).

This sequence belongs to the RNase K family.

The protein resides in the membrane. Its function is as follows. Endoribonuclease which preferentially cleaves ApU and ApG phosphodiester bonds. The sequence is that of Ribonuclease kappa-A (rnasek-a) from Xenopus laevis (African clawed frog).